The sequence spans 102 residues: Large ribosomal subunit protein bL28 (102 aa).

Positions 1–20 are disordered; the sequence is MSRRCELTAKGPQVGHKVSH.

Belongs to the bacterial ribosomal protein bL28 family.

This Bradyrhizobium sp. (strain BTAi1 / ATCC BAA-1182) protein is Large ribosomal subunit protein bL28.